A 376-amino-acid chain; its full sequence is 4-hydroxy-3-methylbut-2-en-1-yl diphosphate synthase (flavodoxin) (376 aa).

Positions 270, 273, 305, and 312 each coordinate [4Fe-4S] cluster.

The protein belongs to the IspG family. [4Fe-4S] cluster serves as cofactor.

It carries out the reaction (2E)-4-hydroxy-3-methylbut-2-enyl diphosphate + oxidized [flavodoxin] + H2O + 2 H(+) = 2-C-methyl-D-erythritol 2,4-cyclic diphosphate + reduced [flavodoxin]. Its pathway is isoprenoid biosynthesis; isopentenyl diphosphate biosynthesis via DXP pathway; isopentenyl diphosphate from 1-deoxy-D-xylulose 5-phosphate: step 5/6. In terms of biological role, converts 2C-methyl-D-erythritol 2,4-cyclodiphosphate (ME-2,4cPP) into 1-hydroxy-2-methyl-2-(E)-butenyl 4-diphosphate. This chain is 4-hydroxy-3-methylbut-2-en-1-yl diphosphate synthase (flavodoxin), found in Colwellia psychrerythraea (strain 34H / ATCC BAA-681) (Vibrio psychroerythus).